A 514-amino-acid polypeptide reads, in one-letter code: Transmembrane protein 117 (514 aa).

At Met-1–Arg-15 the chain is on the cytoplasmic side. The chain crosses the membrane as a helical span at residues Met-16–Ser-36. Residues His-37–Arg-65 lie on the Extracellular side of the membrane. A helical transmembrane segment spans residues Ile-66–Leu-86. Residues Phe-87–Thr-110 lie on the Cytoplasmic side of the membrane. The chain crosses the membrane as a helical span at residues Met-111–Leu-131. The Extracellular segment spans residues Met-132–Lys-154. Residues Leu-155–Met-175 traverse the membrane as a helical segment. The Cytoplasmic portion of the chain corresponds to Leu-176 to Arg-198. A helical membrane pass occupies residues Ile-199–Thr-219. The Extracellular portion of the chain corresponds to Asp-220 to Arg-239. The chain crosses the membrane as a helical span at residues Ala-240 to Phe-260. Residues Pro-261 to Arg-295 are Cytoplasmic-facing. A helical membrane pass occupies residues Ile-296–Leu-316. Residues Asn-317–Cys-394 are Extracellular-facing. Asn-353 and Asn-371 each carry an N-linked (GlcNAc...) asparagine glycan. Residues Leu-395–Gly-415 traverse the membrane as a helical segment. Topologically, residues Arg-416–Asn-514 are cytoplasmic. 2 disordered regions span residues Lys-429–Asp-459 and Glu-486–Asn-514. Residues Ser-438–Ile-448 are compositionally biased toward basic and acidic residues. Residue Thr-453 is modified to Phosphothreonine.

It belongs to the TMEM117 family.

The protein localises to the cell membrane. Involved in endoplasmic reticulum (ER) stress-induced cell death pathway. The protein is Transmembrane protein 117 (TMEM117) of Homo sapiens (Human).